The primary structure comprises 436 residues: Adenylosuccinate synthetase (436 aa).

GTP-binding positions include 12 to 18 (GDEGKGK) and 40 to 42 (GHT). The Proton acceptor role is filled by Asp-13. Residues Asp-13 and Gly-40 each coordinate Mg(2+). Residues 13-16 (DEGK), 38-41 (NAGH), Thr-128, Arg-142, Gln-223, Thr-238, and Arg-302 each bind IMP. His-41 functions as the Proton donor in the catalytic mechanism. 298-304 (TTTGRRR) is a substrate binding site. Residues Arg-304, 330–332 (KLD), and 412–414 (SLG) each bind GTP.

It belongs to the adenylosuccinate synthetase family. In terms of assembly, homodimer. Mg(2+) serves as cofactor.

It localises to the cytoplasm. The catalysed reaction is IMP + L-aspartate + GTP = N(6)-(1,2-dicarboxyethyl)-AMP + GDP + phosphate + 2 H(+). It participates in purine metabolism; AMP biosynthesis via de novo pathway; AMP from IMP: step 1/2. In terms of biological role, plays an important role in the de novo pathway of purine nucleotide biosynthesis. Catalyzes the first committed step in the biosynthesis of AMP from IMP. This chain is Adenylosuccinate synthetase, found in Prochlorococcus marinus (strain MIT 9301).